Consider the following 413-residue polypeptide: Serine/threonine transporter SstT (413 aa).

Transmembrane regions (helical) follow at residues 11–31 (IANG…VILA), 43–63 (FLGS…VFVL), 82–102 (IIGL…LFSF), 141–161 (ALLT…GITM), 192–212 (IGIF…ALAG), 216–236 (LLMV…PIIV), 298–318 (MGGA…TLGI), 339–359 (ASGV…LFGI), and 363–383 (VAMQ…SAET).

Belongs to the dicarboxylate/amino acid:cation symporter (DAACS) (TC 2.A.23) family.

The protein localises to the cell inner membrane. The enzyme catalyses L-serine(in) + Na(+)(in) = L-serine(out) + Na(+)(out). It catalyses the reaction L-threonine(in) + Na(+)(in) = L-threonine(out) + Na(+)(out). Functionally, involved in the import of serine and threonine into the cell, with the concomitant import of sodium (symport system). The sequence is that of Serine/threonine transporter SstT from Shewanella frigidimarina (strain NCIMB 400).